A 1296-amino-acid chain; its full sequence is DNA-directed RNA polymerase subunit beta' (1296 aa).

Residues cysteine 60, cysteine 62, cysteine 75, and cysteine 78 each contribute to the Zn(2+) site. The disordered stretch occupies residues 188–209 (GAKGDARRKVRESAEREMRQIR). Residues aspartate 535, aspartate 537, and aspartate 539 each contribute to the Mg(2+) site. Residues cysteine 877, cysteine 954, cysteine 961, and cysteine 964 each contribute to the Zn(2+) site.

This sequence belongs to the RNA polymerase beta' chain family. The RNAP catalytic core consists of 2 alpha, 1 beta, 1 beta' and 1 omega subunit. When a sigma factor is associated with the core the holoenzyme is formed, which can initiate transcription. It depends on Mg(2+) as a cofactor. Requires Zn(2+) as cofactor.

The catalysed reaction is RNA(n) + a ribonucleoside 5'-triphosphate = RNA(n+1) + diphosphate. Functionally, DNA-dependent RNA polymerase catalyzes the transcription of DNA into RNA using the four ribonucleoside triphosphates as substrates. In Parafrankia sp. (strain EAN1pec), this protein is DNA-directed RNA polymerase subunit beta'.